Reading from the N-terminus, the 790-residue chain is Kinesin-like protein KIN-14D (790 aa).

Disordered regions lie at residues 1–56 (MPLR…DVGS) and 116–139 (DKEN…LDAK). The tract at residues 1 to 66 (MPLRNQNRAP…TEECGKVEFT (66 aa)) is globular. Basic and acidic residues predominate over residues 16–33 (VKKEALSSIPFDKRRKET). The segment covering 34–55 (QGTGRRQVLSTVNRQDANSDVG) has biased composition (polar residues). Coiled-coil stretches lie at residues 117–316 (KENL…HVVQ) and 347–426 (SLEE…LELK). Residues 127–139 (AEKRYSDKELDAK) show a composition bias toward basic and acidic residues. A Kinesin motor domain is found at 428–769 (NIRVFCRVRP…LRFAARVNAC (342 aa)). Residue 513 to 520 (GQTGSGKT) coordinates ATP.

Belongs to the TRAFAC class myosin-kinesin ATPase superfamily. Kinesin family. KIN-14 subfamily. As to expression, slightly expressed in anther lobes with pollen mother cells at anther stage 5. Strongly expressed at anther stage 6 in the tapetum and meiotic cells. Also detected in the gynoecium and the ovule.

It is found in the cytoplasm. Its subcellular location is the cytoskeleton. It localises to the phragmoplast. Functionally, kinesin that supports microtubule movement in an ATP-dependent manner and that functions as a minus-end directed motor as well as a plus-end tracking protein. During mitosis, is involved in early spindle assembly. Participates in the capture of antiparallel interpolar microtubules and helps in generating force to coalign microtubules. This chain is Kinesin-like protein KIN-14D, found in Arabidopsis thaliana (Mouse-ear cress).